The sequence spans 343 residues: L-threonine 3-dehydrogenase (343 aa).

Cys38 is a Zn(2+) binding site. Active-site charge relay system residues include Thr40 and His43. 6 residues coordinate Zn(2+): His63, Glu64, Cys93, Cys96, Cys99, and Cys107. Residues Ile175, Asp195, Arg200, 262–264 (LGI), and 286–287 (IY) each bind NAD(+).

Belongs to the zinc-containing alcohol dehydrogenase family. As to quaternary structure, homotetramer. The cofactor is Zn(2+).

It localises to the cytoplasm. The enzyme catalyses L-threonine + NAD(+) = (2S)-2-amino-3-oxobutanoate + NADH + H(+). It participates in amino-acid degradation; L-threonine degradation via oxydo-reductase pathway; glycine from L-threonine: step 1/2. Catalyzes the NAD(+)-dependent oxidation of L-threonine to 2-amino-3-ketobutyrate. The polypeptide is L-threonine 3-dehydrogenase (Paraburkholderia xenovorans (strain LB400)).